The primary structure comprises 57 residues: UPF0391 membrane protein RPB_2510 (57 aa).

Helical transmembrane passes span 6–26 (WALI…TGIS) and 35–55 (ILFY…FTIF).

Belongs to the UPF0391 family.

It is found in the cell membrane. This Rhodopseudomonas palustris (strain HaA2) protein is UPF0391 membrane protein RPB_2510.